A 495-amino-acid polypeptide reads, in one-letter code: GTPase Der (495 aa).

Residues 3–178 enclose the EngA-type G 1 domain; the sequence is AKIALVGRPN…EMRDLLPEED (176 aa). GTP is bound by residues 9 to 16, 57 to 61, and 130 to 133; these read GRPNVGKS, DTGGI, and NKVD. The segment at 190–227 is disordered; sequence TAVASADADVDADVETEGGTSASETEEGITEETVEDEP. A compositionally biased stretch (acidic residues) spans 213–227; that stretch reads ETEEGITEETVEDEP. The 174-residue stretch at 231–404 folds into the EngA-type G 2 domain; it reads LRLCMLGRPN…LAARIRRECS (174 aa). GTP-binding positions include 237–244, 284–288, and 349–352; these read GRPNAGKS, DTAGV, and NKMD. Residues 405-489 form the KH-like domain; that stretch reads VRIPTGQLNR…PMRVHFRSSH (85 aa).

The protein belongs to the TRAFAC class TrmE-Era-EngA-EngB-Septin-like GTPase superfamily. EngA (Der) GTPase family. As to quaternary structure, associates with the 50S ribosomal subunit.

GTPase that plays an essential role in the late steps of ribosome biogenesis. This chain is GTPase Der, found in Nitratidesulfovibrio vulgaris (strain DP4) (Desulfovibrio vulgaris).